The sequence spans 359 residues: MNIKKLVRKDIRELIPYQSARKIGGKGDIWLNANEFPEFNNIKLNNIILNRYPECQPEQLTSCYSSYIGINKSNILITRGIDEAIELLIKTFCNPQNEKIIFCPPTYDMYNISAKIIGIKSYEVPLLNFSWQLDINNIAKYISDAKLIYICNPNNPTGNLINYQDIITLLNITLGKTLVIVDEAYIEFSPIHSLTNLIDTYPNLVILRTLSKAFALAGLRCGFILTNVNIVKFLLKVINPYPIPIPTTSIAVQFLSKNNINEMRNRIFDLTLNRFWLVNKLKSMNNCVEHVFNSFANYILVRFYNSRKVFDILSKKGIIVRDQSNKLHLSRCLRISIGTSKECLEVVRVIQKINSLCVY.

Residue Lys-212 is modified to N6-(pyridoxal phosphate)lysine.

The protein belongs to the class-II pyridoxal-phosphate-dependent aminotransferase family. Histidinol-phosphate aminotransferase subfamily. Homodimer. It depends on pyridoxal 5'-phosphate as a cofactor.

The enzyme catalyses L-histidinol phosphate + 2-oxoglutarate = 3-(imidazol-4-yl)-2-oxopropyl phosphate + L-glutamate. It functions in the pathway amino-acid biosynthesis; L-histidine biosynthesis; L-histidine from 5-phospho-alpha-D-ribose 1-diphosphate: step 7/9. The protein is Histidinol-phosphate aminotransferase of Buchnera aphidicola subsp. Melaphis rhois.